The following is a 481-amino-acid chain: Ribulose bisphosphate carboxylase large chain (481 aa).

Residues 1–2 constitute a propeptide that is removed on maturation; the sequence is MS. Pro-3 bears the N-acetylproline mark. The residue at position 14 (Lys-14) is an N6,N6,N6-trimethyllysine. Substrate is bound by residues Asn-123 and Thr-173. The Proton acceptor role is filled by Lys-175. Lys-177 contributes to the substrate binding site. Residues Lys-201, Asp-203, and Glu-204 each contribute to the Mg(2+) site. Position 201 is an N6-carboxylysine (Lys-201). The active-site Proton acceptor is the His-294. Residues Arg-295, His-327, and Ser-379 each coordinate substrate.

The protein belongs to the RuBisCO large chain family. Type I subfamily. As to quaternary structure, heterohexadecamer of 8 large chains and 8 small chains; disulfide-linked. The disulfide link is formed within the large subunit homodimers. Mg(2+) serves as cofactor. Post-translationally, the disulfide bond which can form in the large chain dimeric partners within the hexadecamer appears to be associated with oxidative stress and protein turnover.

Its subcellular location is the plastid. The catalysed reaction is 2 (2R)-3-phosphoglycerate + 2 H(+) = D-ribulose 1,5-bisphosphate + CO2 + H2O. The enzyme catalyses D-ribulose 1,5-bisphosphate + O2 = 2-phosphoglycolate + (2R)-3-phosphoglycerate + 2 H(+). In terms of biological role, ruBisCO catalyzes two reactions: the carboxylation of D-ribulose 1,5-bisphosphate, the primary event in carbon dioxide fixation, as well as the oxidative fragmentation of the pentose substrate in the photorespiration process. Both reactions occur simultaneously and in competition at the same active site. The protein is Ribulose bisphosphate carboxylase large chain of Cuscuta gronovii (Common dodder).